The chain runs to 272 residues: 3-methyl-2-oxobutanoate hydroxymethyltransferase (272 aa).

Mg(2+) is bound by residues Asp42 and Asp86. Residues 42 to 43 (DS), Asp86, and Lys116 contribute to the 3-methyl-2-oxobutanoate site. Glu118 is a binding site for Mg(2+). The Proton acceptor role is filled by Glu185.

The protein belongs to the PanB family. Homodecamer; pentamer of dimers. Mg(2+) serves as cofactor.

It localises to the cytoplasm. The enzyme catalyses 3-methyl-2-oxobutanoate + (6R)-5,10-methylene-5,6,7,8-tetrahydrofolate + H2O = 2-dehydropantoate + (6S)-5,6,7,8-tetrahydrofolate. The protein operates within cofactor biosynthesis; (R)-pantothenate biosynthesis; (R)-pantoate from 3-methyl-2-oxobutanoate: step 1/2. Functionally, catalyzes the reversible reaction in which hydroxymethyl group from 5,10-methylenetetrahydrofolate is transferred onto alpha-ketoisovalerate to form ketopantoate. This Prochlorococcus marinus (strain MIT 9303) protein is 3-methyl-2-oxobutanoate hydroxymethyltransferase.